The sequence spans 394 residues: Elongation factor Tu (394 aa).

The tr-type G domain maps to 10-204 (KPHVNVGTIG…HLDTYIPEPE (195 aa)). Residues 19-26 (GHVDHGKT) form a G1 region. Residue 19 to 26 (GHVDHGKT) participates in GTP binding. A Mg(2+)-binding site is contributed by Thr-26. Residues 60–64 (GITIN) are G2. Residues 81-84 (DCPG) form a G3 region. Residues 81–85 (DCPGH) and 136–139 (NKCD) each bind GTP. Residues 136-139 (NKCD) are G4. The G5 stretch occupies residues 174-176 (SAL).

Belongs to the TRAFAC class translation factor GTPase superfamily. Classic translation factor GTPase family. EF-Tu/EF-1A subfamily. In terms of assembly, monomer.

The protein resides in the cytoplasm. It catalyses the reaction GTP + H2O = GDP + phosphate + H(+). GTP hydrolase that promotes the GTP-dependent binding of aminoacyl-tRNA to the A-site of ribosomes during protein biosynthesis. In Actinobacillus pleuropneumoniae serotype 5b (strain L20), this protein is Elongation factor Tu.